We begin with the raw amino-acid sequence, 74 residues long: uncharacterized protein (74 aa).

Composition is skewed to basic and acidic residues over residues 1 to 13 and 20 to 60; these read MKKQKSIDKHQLK and IKAK…KSFE. The segment at 1–74 is disordered; that stretch reads MKKQKSIDKH…ESQMDWHQYK (74 aa). The span at 64–74 shows a compositional bias: polar residues; it reads NESQMDWHQYK.

This is an uncharacterized protein from Bacillus subtilis (strain 168).